Reading from the N-terminus, the 589-residue chain is Arginine--tRNA ligase (589 aa).

The 'HIGH' region signature appears at 132–142 (PNTNKPLHVGH).

It belongs to the class-I aminoacyl-tRNA synthetase family. Monomer.

The protein resides in the cytoplasm. It carries out the reaction tRNA(Arg) + L-arginine + ATP = L-arginyl-tRNA(Arg) + AMP + diphosphate. The polypeptide is Arginine--tRNA ligase (Treponema pallidum subsp. pallidum (strain SS14)).